Here is a 240-residue protein sequence, read N- to C-terminus: Anti-H(O) lectin (240 aa).

N-linked (GlcNAc...) asparagine glycosylation is present at Asn4. Mn(2+)-binding residues include Glu124 and Asp126. Ca(2+)-binding residues include Asp126, Tyr128, Asn130, and Asp133. Mn(2+) contacts are provided by Asp133 and His141.

Belongs to the leguminous lectin family.

Functionally, L-fucose specific lectin. This chain is Anti-H(O) lectin, found in Lotus tetragonolobus (Winged pea).